Here is a 340-residue protein sequence, read N- to C-terminus: Phenylalanine--tRNA ligase alpha subunit (340 aa).

Position 254 (E254) interacts with Mg(2+).

It belongs to the class-II aminoacyl-tRNA synthetase family. Phe-tRNA synthetase alpha subunit type 1 subfamily. As to quaternary structure, tetramer of two alpha and two beta subunits. Mg(2+) serves as cofactor.

It is found in the cytoplasm. It catalyses the reaction tRNA(Phe) + L-phenylalanine + ATP = L-phenylalanyl-tRNA(Phe) + AMP + diphosphate + H(+). This chain is Phenylalanine--tRNA ligase alpha subunit, found in Caldicellulosiruptor bescii (strain ATCC BAA-1888 / DSM 6725 / KCTC 15123 / Z-1320) (Anaerocellum thermophilum).